The sequence spans 183 residues: Fetal and adult testis-expressed transcript protein (183 aa).

A disordered region spans residues 42–66 (SRSRGASQKKQKLEQKAAGSASAKR). A helical transmembrane segment spans residues 163 to 181 (TLIIAVLVSASIANLWLWM).

Interacts with BIK and RNF183. Interacts with IMMT/MIC60and EMD. In terms of tissue distribution, testis-specific in fetus (aged from 6 to 11 weeks). In adult, expressed predominantly in testis, with some expression in lung, heart, kidney, adrenal gland and whole brain. Highly expressed in certain types of cancer tissues such as hepatocellular carcinoma, colon and gastric cancer. Weakly expressed in normal pancreas.

It is found in the mitochondrion. It localises to the mitochondrion outer membrane. The protein resides in the endoplasmic reticulum membrane. Involved in the regulation of endoplasmic reticulum (ER)-mitochondria coupling. Negatively regulates the ER-mitochondria distance and Ca(2+) transfer from ER to mitochondria possibly implicating it in the regulation of apoptosis. May collaborate with RNF183 to restrain BIK protein levels thus regulating apoptotic signaling. This Homo sapiens (Human) protein is Fetal and adult testis-expressed transcript protein (FATE1).